We begin with the raw amino-acid sequence, 77 residues long: Small ribosomal subunit protein bS20 (77 aa).

This sequence belongs to the bacterial ribosomal protein bS20 family.

In terms of biological role, binds directly to 16S ribosomal RNA. In Streptococcus uberis (strain ATCC BAA-854 / 0140J), this protein is Small ribosomal subunit protein bS20.